A 359-amino-acid chain; its full sequence is MILNSSIEDGIKRIQDDCPKAGRHNYIFVMIPTLYSIIFVVGIFGNSLVVIVIYFYMKLKTVASVFLLNLALADLCFLLTLPLWAVYTAMEYQWPFGNHLCKIASASVSFNLYASVFLLTCLSIDRYLAIVHPMKSRLRRTMLVAKVTCIIIWLMAGLASLPAVIHRNVYFIENTNITVCAFHYESQNSTLPIGLGLTKNILGFVFPFVIILTSYTLIWKALKKAYKIQKNTPRNDDIFRIIMAIVLFFFFSWVPHQIFSFLDVLIQLGVIHDCEIADVVDTAMPITICIAYFNNCLNPLFYGFLGKKFKRYFLQLLKYIPPKARSHAGLSTKMSTLSYRPSDNMSSSARKSAYCFEVE.

The Extracellular segment spans residues Met-1 to Asn-25. A glycan (N-linked (GlcNAc...) asparagine) is linked at Asn-4. Residues Gln-15 and Asp-17 each coordinate angiotensin II. 2 disulfides stabilise this stretch: Cys-18-Cys-274 and Cys-101-Cys-180. A helical membrane pass occupies residues Tyr-26–Phe-55. Residues Tyr-56–Thr-61 lie on the Cytoplasmic side of the membrane. Residues Val-62–Ala-89 form a helical membrane-spanning segment. Residues Met-90 to Asn-98 lie on the Extracellular side of the membrane. The helical transmembrane segment at His-99 to Asp-125 threads the bilayer. Over Arg-126–Thr-141 the chain is Cytoplasmic. A helical transmembrane segment spans residues Met-142–Ile-165. The Extracellular segment spans residues His-166 to Thr-190. Angiotensin II is bound at residue Arg-167. Residue Asn-176 is glycosylated (N-linked (GlcNAc...) asparagine). Angiotensin II is bound by residues Phe-182, His-183, and Tyr-184. An N-linked (GlcNAc...) asparagine glycan is attached at Asn-188. A helical transmembrane segment spans residues Leu-191–Thr-216. Lys-199 is an angiotensin II binding site. Topologically, residues Leu-217 to Phe-239 are cytoplasmic. Residues Arg-240–Leu-268 traverse the membrane as a helical segment. Residues Gly-269 to Asp-278 are Extracellular-facing. A helical transmembrane segment spans residues Val-279–Phe-304. Residues Leu-305–Glu-359 lie on the Cytoplasmic side of the membrane. A lipid anchor (S-palmitoyl cysteine) is attached at Cys-355.

The protein belongs to the G-protein coupled receptor 1 family. As to quaternary structure, interacts with MAS1. Interacts with ARRB1. Interacts with FLNA (via filamin repeat 21); increases PKA-mediated phosphorylation of FLNA. C-terminal Ser or Thr residues may be phosphorylated.

It is found in the cell membrane. Receptor for angiotensin II, a vasoconstricting peptide, which acts as a key regulator of blood pressure and sodium retention by the kidney. The activated receptor in turn couples to G-alpha proteins G(q) (GNAQ, GNA11, GNA14 or GNA15) and thus activates phospholipase C and increases the cytosolic Ca(2+) concentrations, which in turn triggers cellular responses such as stimulation of protein kinase C. The protein is Type-1 angiotensin II receptor B (Agtr1b) of Mus musculus (Mouse).